A 522-amino-acid polypeptide reads, in one-letter code: Probable mannosyltransferase KTR5 (522 aa).

Residues 1 to 16 (MLLIRRTINAFLGCIH) lie on the Cytoplasmic side of the membrane. A helical; Signal-anchor for type II membrane protein membrane pass occupies residues 17–37 (CNLTATCILIAFVITMYVVLV). The interval 38 to 82 (SEPASVDGTMGNFLPFSKMDLATKRDRPFYSNCVNTQDYLLNPSY) is stem region. Residues 38–522 (SEPASVDGTM…REDYLRQFGN (485 aa)) lie on the Lumenal side of the membrane. The tract at residues 83-522 (IKQNASFVML…REDYLRQFGN (440 aa)) is catalytic. N-linked (GlcNAc...) asparagine glycosylation is present at N86. The active-site Nucleophile is E363.

It belongs to the glycosyltransferase 15 family.

The protein localises to the membrane. In terms of biological role, possible glycosyltransferase that transfers an alpha-D-mannosyl residue from GDP-mannose into lipid-linked oligosaccharide, forming an alpha-(1-&gt;2)-D-mannosyl-D-mannose linkage. This Saccharomyces cerevisiae (strain ATCC 204508 / S288c) (Baker's yeast) protein is Probable mannosyltransferase KTR5 (KTR5).